A 151-amino-acid polypeptide reads, in one-letter code: D-aminoacyl-tRNA deacylase (151 aa).

Positions 137–138 (GP) match the Gly-cisPro motif, important for rejection of L-amino acids motif.

Belongs to the DTD family. As to quaternary structure, homodimer.

It is found in the cytoplasm. The catalysed reaction is glycyl-tRNA(Ala) + H2O = tRNA(Ala) + glycine + H(+). It catalyses the reaction a D-aminoacyl-tRNA + H2O = a tRNA + a D-alpha-amino acid + H(+). Functionally, an aminoacyl-tRNA editing enzyme that deacylates mischarged D-aminoacyl-tRNAs. Also deacylates mischarged glycyl-tRNA(Ala), protecting cells against glycine mischarging by AlaRS. Acts via tRNA-based rather than protein-based catalysis; rejects L-amino acids rather than detecting D-amino acids in the active site. By recycling D-aminoacyl-tRNA to D-amino acids and free tRNA molecules, this enzyme counteracts the toxicity associated with the formation of D-aminoacyl-tRNA entities in vivo and helps enforce protein L-homochirality. This is D-aminoacyl-tRNA deacylase from Fusobacterium nucleatum subsp. nucleatum (strain ATCC 25586 / DSM 15643 / BCRC 10681 / CIP 101130 / JCM 8532 / KCTC 2640 / LMG 13131 / VPI 4355).